The following is a 336-amino-acid chain: MTLPSAARVYTDVNAHKPDEYWDYENYVVDWGNQDDYQLVRKLGRGKYSEVFEAINITTTEKCVVKILKPVKKKKIKREIKILENLRGGTNIITLLAVVKDPVSRTPALIFEHVNNTDFKQLYQTLTDYEIRYYLFELLKALDYCHSMGIMHRDVKPHNVMIDHENRKLRLIDWGLAEFYHPGQEYNVRVASRYFKGPELLVDYQMYDYSLDMWSLGCMLASMIFRKEPFFHGHDNYDQLVRIAKVLGTEELYAYLDKYNIDLDPRFHDILQRHSRKRWERFVHSDNQHLVSPEALDFLDKLLRYDHVDRLTAREAMAHPYFLPIVNGQMNPNNQQ.

Residues 37-322 (YQLVRKLGRG…AREAMAHPYF (286 aa)) enclose the Protein kinase domain. Residues 43–51 (LGRGKYSEV) and lysine 66 each bind ATP. The Proton acceptor role is filled by aspartate 154.

Belongs to the protein kinase superfamily. Ser/Thr protein kinase family. CK2 subfamily. In terms of assembly, tetramer of two alpha and two beta chains. Mg(2+) serves as cofactor.

It localises to the nucleus. The protein localises to the nucleolus. It carries out the reaction L-seryl-[protein] + ATP = O-phospho-L-seryl-[protein] + ADP + H(+). The enzyme catalyses L-threonyl-[protein] + ATP = O-phospho-L-threonyl-[protein] + ADP + H(+). Casein kinases are operationally defined by their preferential utilization of acidic proteins such as caseins as substrates. The alpha chain contains the catalytic site. May participate in Wnt signaling. The polypeptide is Casein kinase II subunit alpha (CkIIalpha) (Drosophila melanogaster (Fruit fly)).